A 345-amino-acid polypeptide reads, in one-letter code: Phosphoribosylformylglycinamidine cyclo-ligase (345 aa).

The protein belongs to the AIR synthase family.

Its subcellular location is the cytoplasm. It catalyses the reaction 2-formamido-N(1)-(5-O-phospho-beta-D-ribosyl)acetamidine + ATP = 5-amino-1-(5-phospho-beta-D-ribosyl)imidazole + ADP + phosphate + H(+). The protein operates within purine metabolism; IMP biosynthesis via de novo pathway; 5-amino-1-(5-phospho-D-ribosyl)imidazole from N(2)-formyl-N(1)-(5-phospho-D-ribosyl)glycinamide: step 2/2. The sequence is that of Phosphoribosylformylglycinamidine cyclo-ligase from Escherichia coli O127:H6 (strain E2348/69 / EPEC).